Reading from the N-terminus, the 449-residue chain is Zinc finger and BTB domain-containing protein 14 (449 aa).

The region spanning 36 to 102 (CDIAIVVEDV…MYTAKISVKK (67 aa)) is the BTB domain. Residue lysine 46 forms a Glycyl lysine isopeptide (Lys-Gly) (interchain with G-Cter in SUMO2) linkage. Residues 50 to 66 (HRCVLAACSTYFKKLFK) carry the Nuclear localization signal motif. Positions 156–194 (ADAQDDDVEEIGDQDDSPSDDTVEGTPPSQEDGKSPTTT) are disordered. Residues 157-178 (DAQDDDVEEIGDQDDSPSDDTV) are compositionally biased toward acidic residues. Residues lysine 203 and lysine 249 each participate in a glycyl lysine isopeptide (Lys-Gly) (interchain with G-Cter in SUMO2) cross-link. 5 C2H2-type zinc fingers span residues 277–304 (IACQ…ADRP), 305–332 (FVCE…GYKP), 333–360 (YSCE…NERP), 361–388 (FACH…GEKP), and 389–417 (FVCG…ERKQ). The segment covering 405–417 (KRHENNMHSERKQ) has biased composition (basic and acidic residues). Positions 405–424 (KRHENNMHSERKQVTPSAIQ) are disordered.

It belongs to the krueppel C2H2-type zinc-finger protein family. As to quaternary structure, interacts with ZBTB21. As to expression, ubiquitous.

It is found in the nucleus. Its function is as follows. Transcriptional activator of the dopamine transporter (DAT), binding it's promoter at the consensus sequence 5'-CCTGCACAGTTCACGGA-3'. Binds to 5'-d(GCC)(n)-3' trinucleotide repeats in promoter regions and acts as a repressor of the FMR1 gene. Transcriptional repressor of MYC and thymidine kinase promoters. The chain is Zinc finger and BTB domain-containing protein 14 (Zbtb14) from Mus musculus (Mouse).